A 402-amino-acid chain; its full sequence is Caspase-1 (402 aa).

The CARD domain maps to 1–91; it reads MADKILRAKR…YLAGILELQS (91 aa). A propeptide spanning residues 1–118 is cleaved from the precursor; that stretch reads MADKILRAKR…PSSSETKEEQ (118 aa). Positions 98–125 are disordered; it reads FVATEDSKGGHPSSSETKEEQNKEDGTF. Basic and acidic residues predominate over residues 113–123; sequence ETKEEQNKEDG. Active-site residues include His-236 and Cys-284. A propeptide spanning residues 297–314 is cleaved from the precursor; it reads SVRDSEEDFLTDAIFEDD. Ser-301 is subject to Phosphoserine. Omega-N-methylarginine is present on Arg-343.

It belongs to the peptidase C14A family. Heterotetramer that consists of two anti-parallel arranged heterodimers, each one formed by a 20 kDa (Caspase-1 subunit p20) and a 10 kDa (Caspase-1 subunit p10) subunit. May be a component of the inflammasome, a protein complex which also includes PYCARD, CARD8 and NLRP2 and whose function would be the activation of pro-inflammatory caspases. Component of the AIM2 PANoptosome complex, a multiprotein complex that drives inflammatory cell death (PANoptosis). Both the p10 and p20 subunits interact with MEFV. Interacts with CARD17P/INCA and CARD18. Interacts with SERPINB1; this interaction regulates CASP1 activity. In terms of assembly, heterotetramer that consists of two anti-parallel arranged heterodimers, each one formed by a 20 kDa (Caspase-1 subunit p20) and a 10 kDa (Caspase-1 subunit p10) subunit. Post-translationally, the two subunits are derived from the precursor sequence by an autocatalytic mechanism. Ubiquitinated via 'Lys-11'-linked polyubiquitination. Deubiquitinated by USP8. In terms of tissue distribution, high level expression seen in spleen and lung, low level expression seen in brain, heart, liver, kidney, testis and skeletal muscle.

The protein resides in the cytoplasm. Its subcellular location is the cell membrane. The enzyme catalyses Strict requirement for an Asp residue at position P1 and has a preferred cleavage sequence of Tyr-Val-Ala-Asp-|-.. Its function is as follows. Thiol protease involved in a variety of inflammatory processes by proteolytically cleaving other proteins, such as the precursors of the inflammatory cytokines interleukin-1 beta (IL1B) and interleukin 18 (IL18) as well as the pyroptosis inducer Gasdermin-D (GSDMD), into active mature peptides. Plays a key role in cell immunity as an inflammatory response initiator: once activated through formation of an inflammasome complex, it initiates a pro-inflammatory response through the cleavage of the two inflammatory cytokines IL1B and IL18, releasing the mature cytokines which are involved in a variety of inflammatory processes. Cleaves a tetrapeptide after an Asp residue at position P1. Also initiates pyroptosis, a programmed lytic cell death pathway, through cleavage of GSDMD. In contrast to cleavage of interleukin IL1B, recognition and cleavage of GSDMD is not strictly dependent on the consensus cleavage site but depends on an exosite interface on CASP1 that recognizes and binds the Gasdermin-D, C-terminal (GSDMD-CT) part. Cleaves and activates CASP7 in response to bacterial infection, promoting plasma membrane repair. Upon inflammasome activation, during DNA virus infection but not RNA virus challenge, controls antiviral immunity through the cleavage of CGAS, rendering it inactive. In apoptotic cells, cleaves SPHK2 which is released from cells and remains enzymatically active extracellularly. The protein is Caspase-1 (Casp1) of Mus musculus (Mouse).